The following is a 669-amino-acid chain: UvrABC system protein B (669 aa).

One can recognise a Helicase ATP-binding domain in the interval 26–414 (EGLEDGLAHQ…SGDVVEQVVR (389 aa)). 39–46 (GVTGSGKT) serves as a coordination point for ATP. Positions 92–115 (YYDYYQPEAYVPSSDTFIEKDASV) match the Beta-hairpin motif. One can recognise a Helicase C-terminal domain in the interval 431–597 (QVDDLLSEIR…GLNKKINDIL (167 aa)). In terms of domain architecture, UVR spans 629–664 (ESKIRELEAKMYQHAQDLEFEQAASVRDQVQALREQ).

Belongs to the UvrB family. In terms of assembly, forms a heterotetramer with UvrA during the search for lesions. Interacts with UvrC in an incision complex.

Its subcellular location is the cytoplasm. Its function is as follows. The UvrABC repair system catalyzes the recognition and processing of DNA lesions. A damage recognition complex composed of 2 UvrA and 2 UvrB subunits scans DNA for abnormalities. Upon binding of the UvrA(2)B(2) complex to a putative damaged site, the DNA wraps around one UvrB monomer. DNA wrap is dependent on ATP binding by UvrB and probably causes local melting of the DNA helix, facilitating insertion of UvrB beta-hairpin between the DNA strands. Then UvrB probes one DNA strand for the presence of a lesion. If a lesion is found the UvrA subunits dissociate and the UvrB-DNA preincision complex is formed. This complex is subsequently bound by UvrC and the second UvrB is released. If no lesion is found, the DNA wraps around the other UvrB subunit that will check the other stand for damage. This Photorhabdus laumondii subsp. laumondii (strain DSM 15139 / CIP 105565 / TT01) (Photorhabdus luminescens subsp. laumondii) protein is UvrABC system protein B.